Reading from the N-terminus, the 712-residue chain is Protein SDA1 homolog (712 aa).

A Phosphothreonine modification is found at T234. S236 carries the phosphoserine modification. Disordered stretches follow at residues T488–I573 and V662–K712. Acidic residues-rich tracts occupy residues I491–D501 and G516–E559. Over residues E560–R572 the composition is skewed to basic and acidic residues. Basic residues-rich tracts occupy residues R671–K692 and A700–K712.

The protein belongs to the SDA1 family.

Its subcellular location is the nucleus. The protein resides in the nucleolus. Functionally, required for 60S pre-ribosomal subunits export to the cytoplasm. The chain is Protein SDA1 homolog (Mys45A) from Drosophila melanogaster (Fruit fly).